We begin with the raw amino-acid sequence, 180 residues long: Large ribosomal subunit protein uL5 (180 aa).

It belongs to the universal ribosomal protein uL5 family. Part of the 50S ribosomal subunit; part of the 5S rRNA/L5/L18/L25 subcomplex. Contacts the 5S rRNA and the P site tRNA. Forms a bridge to the 30S subunit in the 70S ribosome.

Functionally, this is one of the proteins that bind and probably mediate the attachment of the 5S RNA into the large ribosomal subunit, where it forms part of the central protuberance. In the 70S ribosome it contacts protein S13 of the 30S subunit (bridge B1b), connecting the 2 subunits; this bridge is implicated in subunit movement. Contacts the P site tRNA; the 5S rRNA and some of its associated proteins might help stabilize positioning of ribosome-bound tRNAs. In Xanthomonas campestris pv. campestris (strain 8004), this protein is Large ribosomal subunit protein uL5.